A 390-amino-acid chain; its full sequence is GTPase Obg (390 aa).

In terms of domain architecture, Obg spans 1 to 159 (MKFVDEATIK…RELRLELLLL (159 aa)). The 174-residue stretch at 160–333 (ADVGMLGLPN…LCDELADFMD (174 aa)) folds into the OBG-type G domain. GTP contacts are provided by residues 166–173 (GLPNAGKS), 191–195 (FTTLI), 213–216 (DIPG), 283–286 (NKTD), and 314–316 (AAV). Residues S173 and T193 each coordinate Mg(2+).

It belongs to the TRAFAC class OBG-HflX-like GTPase superfamily. OBG GTPase family. As to quaternary structure, monomer. Mg(2+) is required as a cofactor.

Its subcellular location is the cytoplasm. In terms of biological role, an essential GTPase which binds GTP, GDP and possibly (p)ppGpp with moderate affinity, with high nucleotide exchange rates and a fairly low GTP hydrolysis rate. Plays a role in control of the cell cycle, stress response, ribosome biogenesis and in those bacteria that undergo differentiation, in morphogenesis control. The protein is GTPase Obg of Aliivibrio fischeri (strain MJ11) (Vibrio fischeri).